Reading from the N-terminus, the 312-residue chain is Non-structural protein 12A (312 aa).

The segment covering 1 to 23 has biased composition (low complexity); the sequence is MFKSGSGSLKRSGSISSVKSFSG. Disordered stretches follow at residues 1–37, 62–99, and 111–161; these read MFKSGSGSLKRSGSISSVKSFSGDSEKGLPPISRGSV, FVPEKTKSEGNLKDKSSVITGNFGSSGPINAHTNQNAD, and ESSK…GTGD. A compositionally biased stretch (basic and acidic residues) spans 63–77; the sequence is VPEKTKSEGNLKDKS. Polar residues predominate over residues 78–98; that stretch reads SVITGNFGSSGPINAHTNQNA. The span at 122-134 shows a compositional bias: basic and acidic residues; that stretch reads DARHTATDSRLSQ.

It belongs to the phytoreovirus non-structural protein Pns12A family.

The protein localises to the host cytoplasm. Constituent of viral factories. Binds to ssRNA and dsRNA. This is Non-structural protein 12A from Alopecurus aequalis (Barnyard grass).